A 481-amino-acid polypeptide reads, in one-letter code: Proline--tRNA ligase 2 (481 aa).

This sequence belongs to the class-II aminoacyl-tRNA synthetase family. ProS type 3 subfamily. Homodimer.

It localises to the cytoplasm. It catalyses the reaction tRNA(Pro) + L-proline + ATP = L-prolyl-tRNA(Pro) + AMP + diphosphate. Its function is as follows. Catalyzes the attachment of proline to tRNA(Pro) in a two-step reaction: proline is first activated by ATP to form Pro-AMP and then transferred to the acceptor end of tRNA(Pro). This Clostridioides difficile (strain 630) (Peptoclostridium difficile) protein is Proline--tRNA ligase 2.